The primary structure comprises 1025 residues: MKFFALFIYRPVATILLSVAITLCGILGFRMLPVAPLPQVDFPVIMVSASLPGASPETMASSVATPLERSLGRIAGVSEMTSSSSLGSTRIILQFDFDRDINGAARDVQAAINAAQSLLPSGMPSRPTYRKANPSDAPIMILTLTSDTYSQGELYDFASTQLAPTISQIDGVGDVDVGGSSLPAVRVGLNPQALFNQGVSLDDVRTAISNANVRKPQGALEDDTHRWQIQTNDELKTAAEYQPLIIHYNNGGAVRLGDVATVTDSVQDVRNAGMTNAKPAILLMIRKLPEANIIQTVDSIRARLPELQSTIPAAIDLQIAQDRSPTIRASLEEVEQTLVISVALVILVVFLFLRSGRATIIPAVAVPVSLIGTFAAMYLCGFSLNNLSLMALTIATGFVVDDAIVVLENIARHLEAGMKPLQAALQGTREVGFTVLSMSLSLVAVFLPLLLMGGLPGRLLREFAVTLSVAIGISLLVSLTLTPMMCGWMLKASKPREQKRLRGFGRMLVALQQGYGKSLKWVLNHTRLVGAVLLGTIALNIWLYISIPKTFFPEQDTGVLMGGIQADQSISFQAMRGKLQDFMKIIRDEPAVDNVTGFTGGSRVNSGMMFITLKPRGERSETAQQIIDRLRKKLAKEPGANLFLMAVQDIRVGGRQANASYQYTLLSDDLAALREWEPKIRKKLATLPELADVNSDQEDNGAEMNLIYDRDTMARLGIDVQAANSLLNNAFGQRQISTIYQPMNQYKVVMEVDPRYTQDISALEKMFVINNEGKAIPLSYFAKWQPANAPLSVNHQGLSAASTISFNLPTGKSLSDASAAIDRAMTQLGVPSTVRGSFAGTAQVFQETMNSQVILIIAAIATVYIVLGILYESYVHPLTILSTLPSAGVGALLALELFNAPFSLIALIGIMLLIGIVKKNAIMMVDFALEAQRHGNLTPQEAIFQACLLRFRPIMMTTLAALFGALPLVLSGGDGSELRQPLGITIVGGLVMSQLLTLYTTPVVYLFFDRLRLRFSRKPKQAVTE.

A run of 12 helical transmembrane segments spans residues 3–23 (FFAL…AITL), 333–353 (EVEQ…FLFL), 360–380 (IIPA…MYLC), 387–407 (LSLM…IVVL), 431–451 (VGFT…PLLL), 463–483 (FAVT…TLTP), 528–548 (LVGA…ISIP), 853–873 (VILI…LYES), 875–895 (VHPL…LLAL), 897–917 (LFNA…IGIV), 953–973 (PIMM…LSGG), and 984–1004 (ITIV…TPVV).

It belongs to the resistance-nodulation-cell division (RND) (TC 2.A.6) family. MdtC subfamily. In terms of assembly, part of a tripartite efflux system composed of MdtA, MdtB and MdtC. MdtC forms a heteromultimer with MdtB.

It localises to the cell inner membrane. In terms of biological role, the MdtABC tripartite complex confers resistance against novobiocin and deoxycholate. This Escherichia coli O81 (strain ED1a) protein is Multidrug resistance protein MdtC.